Reading from the N-terminus, the 314-residue chain is Pyridoxal 5'-phosphate synthase-like subunit PDX1.2 (314 aa).

Position 2 is an N-acetylalanine (A2).

This sequence belongs to the PdxS/SNZ family. As to quaternary structure, homodimer or heterodimer with PDX1.1 or PDX1.3. No interaction with PDX2. In terms of tissue distribution, expressed in callus tissues, flowers and roots. Weakly expressed in leaves and stems.

Its subcellular location is the cytoplasm. The protein has no function in the formation of pyridoxal 5'-phosphate. The protein is Pyridoxal 5'-phosphate synthase-like subunit PDX1.2 (PDX12) of Arabidopsis thaliana (Mouse-ear cress).